The sequence spans 282 residues: tRNA uridine(34) hydroxylase (282 aa).

One can recognise a Rhodanese domain in the interval glutamate 128–tyrosine 222. Residue cysteine 182 is the Cysteine persulfide intermediate of the active site.

The protein belongs to the TrhO family.

It catalyses the reaction uridine(34) in tRNA + AH2 + O2 = 5-hydroxyuridine(34) in tRNA + A + H2O. Its function is as follows. Catalyzes oxygen-dependent 5-hydroxyuridine (ho5U) modification at position 34 in tRNAs. The protein is tRNA uridine(34) hydroxylase of Cupriavidus taiwanensis (strain DSM 17343 / BCRC 17206 / CCUG 44338 / CIP 107171 / LMG 19424 / R1) (Ralstonia taiwanensis (strain LMG 19424)).